A 482-amino-acid chain; its full sequence is Tektin (482 aa).

Coiled-coil stretches lie at residues 100 to 129 (CLAE…QAKI), 171 to 204 (ARAV…ALRV), 282 to 324 (RLNE…ALTS), 376 to 407 (VKVA…DALR), and 441 to 478 (RTQT…TMGG). Positions 311-330 (EQARAKGQRSALTSALDDKR) are disordered. R462 is modified (asymmetric dimethylarginine).

This sequence belongs to the tektin family. In terms of processing, asymmetrically dimethylated at Arg-462 during flagellum resorption. Probably methylated by PRMT1.

It localises to the cytoplasm. The protein resides in the cytoskeleton. It is found in the flagellum axoneme. The protein localises to the flagellum basal body. Its function is as follows. Structural component of ciliary and flagellar microtubules. Plays a key role in the assembly or attachment of the inner dynein arm to microtubules in flagella and cilia. Forms filamentous polymers in the walls of ciliary and flagellar microtubules. The protein is Tektin of Chlamydomonas reinhardtii (Chlamydomonas smithii).